The primary structure comprises 313 residues: Olfactory receptor 4M2 (313 aa).

The Extracellular portion of the chain corresponds to 1–25 (METANYTKVTEFVLTGLSQTPEVQL). Asn-5 is a glycosylation site (N-linked (GlcNAc...) asparagine). A helical membrane pass occupies residues 26–49 (VLFVIFLSFYLFILPGNILIICTI). Residues 50 to 57 (SLDPHLTS) are Cytoplasmic-facing. A helical transmembrane segment spans residues 58-79 (PMYFLLANLAFLDIWYSSITAP). Residues 80-100 (EMLIDFFVERKIISFDGCIAQ) lie on the Extracellular side of the membrane. Cys-97 and Cys-189 are oxidised to a cystine. Residues 101–120 (LFFLHFAGASEMFLLTVMAF) form a helical membrane-spanning segment. The Cytoplasmic segment spans residues 121 to 139 (DLYTAICRPLHYATIMNQR). A helical membrane pass occupies residues 140–158 (LCCILVALSWRGGFIHSII). Over 159-195 (QVALIVRLPFCGPNELDSYFCDITQVVRIACANTFPE) the chain is Extracellular. A helical membrane pass occupies residues 196-219 (ELVMICSSGLISVVCLIALLMSYA). The Cytoplasmic portion of the chain corresponds to 220–237 (FLLALFKKLSGSGENTNR). A helical transmembrane segment spans residues 238–260 (AMSTCYSHITIVVLMFGPSIYIY). Topologically, residues 261–271 (ARPFDSFSLDK) are extracellular. The helical transmembrane segment at 272 to 291 (VVSVFNTLIFPLRNPIIYTL) threads the bilayer. Residues 292-313 (RNKEVKAAMRKLVTKYILCKEK) are Cytoplasmic-facing.

This sequence belongs to the G-protein coupled receptor 1 family.

The protein localises to the cell membrane. In terms of biological role, odorant receptor. In Homo sapiens (Human), this protein is Olfactory receptor 4M2 (OR4M2).